We begin with the raw amino-acid sequence, 308 residues long: Cytochrome b (308 aa).

Helical transmembrane passes span 1 to 21, 45 to 66, 81 to 101, and 146 to 166; these read FGSL…LMAM, WLIR…YLHI, WNTG…GYVL, and FFAL…VHLT. Heme b is bound by residues His-51 and His-65. Heme b is bound by residues His-150 and His-164. His-169 is an a ubiquinone binding site. 3 helical membrane-spanning segments follow: residues 194–214, 256–276, and 288–308; these read IKDI…AMFS, LGGV…PFLH, and LSQL…WVGS.

Belongs to the cytochrome b family. As to quaternary structure, the cytochrome bc1 complex contains 11 subunits: 3 respiratory subunits (MT-CYB, CYC1 and UQCRFS1), 2 core proteins (UQCRC1 and UQCRC2) and 6 low-molecular weight proteins (UQCRH/QCR6, UQCRB/QCR7, UQCRQ/QCR8, UQCR10/QCR9, UQCR11/QCR10 and a cleavage product of UQCRFS1). This cytochrome bc1 complex then forms a dimer. Heme b is required as a cofactor.

Its subcellular location is the mitochondrion inner membrane. Functionally, component of the ubiquinol-cytochrome c reductase complex (complex III or cytochrome b-c1 complex) that is part of the mitochondrial respiratory chain. The b-c1 complex mediates electron transfer from ubiquinol to cytochrome c. Contributes to the generation of a proton gradient across the mitochondrial membrane that is then used for ATP synthesis. This Scytalopus magellanicus (Magellanic tapaculo) protein is Cytochrome b (MT-CYB).